A 576-amino-acid chain; its full sequence is Proline--tRNA ligase (576 aa).

Belongs to the class-II aminoacyl-tRNA synthetase family. ProS type 1 subfamily. In terms of assembly, homodimer.

It is found in the cytoplasm. The enzyme catalyses tRNA(Pro) + L-proline + ATP = L-prolyl-tRNA(Pro) + AMP + diphosphate. In terms of biological role, catalyzes the attachment of proline to tRNA(Pro) in a two-step reaction: proline is first activated by ATP to form Pro-AMP and then transferred to the acceptor end of tRNA(Pro). As ProRS can inadvertently accommodate and process non-cognate amino acids such as alanine and cysteine, to avoid such errors it has two additional distinct editing activities against alanine. One activity is designated as 'pretransfer' editing and involves the tRNA(Pro)-independent hydrolysis of activated Ala-AMP. The other activity is designated 'posttransfer' editing and involves deacylation of mischarged Ala-tRNA(Pro). The misacylated Cys-tRNA(Pro) is not edited by ProRS. In Dechloromonas aromatica (strain RCB), this protein is Proline--tRNA ligase.